Consider the following 157-residue polypeptide: Polyferredoxin protein VhcB (157 aa).

3 consecutive 4Fe-4S ferredoxin-type domains span residues 23–52 (NGIS…VVNP), 62–92 (KTER…MGKI), and 100–129 (DRIE…LNEE). Residues C32, C35, C38, C42, C72, C75, C78, C82, C109, C112, C115, C119, C136, C139, C142, and C146 each coordinate [4Fe-4S] cluster.

Requires [4Fe-4S] cluster as cofactor.

This chain is Polyferredoxin protein VhcB (vhcB), found in Methanococcus voltae.